The sequence spans 185 residues: ATP synthase subunit delta (185 aa).

Belongs to the ATPase delta chain family. As to quaternary structure, F-type ATPases have 2 components, F(1) - the catalytic core - and F(0) - the membrane proton channel. F(1) has five subunits: alpha(3), beta(3), gamma(1), delta(1), epsilon(1). CF(0) has four main subunits: a(1), b(1), b'(1) and c(10-14). The alpha and beta chains form an alternating ring which encloses part of the gamma chain. F(1) is attached to F(0) by a central stalk formed by the gamma and epsilon chains, while a peripheral stalk is formed by the delta, b and b' chains.

It is found in the cell inner membrane. In terms of biological role, f(1)F(0) ATP synthase produces ATP from ADP in the presence of a proton or sodium gradient. F-type ATPases consist of two structural domains, F(1) containing the extramembraneous catalytic core and F(0) containing the membrane proton channel, linked together by a central stalk and a peripheral stalk. During catalysis, ATP synthesis in the catalytic domain of F(1) is coupled via a rotary mechanism of the central stalk subunits to proton translocation. Functionally, this protein is part of the stalk that links CF(0) to CF(1). It either transmits conformational changes from CF(0) to CF(1) or is implicated in proton conduction. The protein is ATP synthase subunit delta of Gloeobacter violaceus (strain ATCC 29082 / PCC 7421).